The primary structure comprises 380 residues: Carbamoyl phosphate synthase small chain (380 aa).

The tract at residues 1-187 is CPSase; it reads MTTSTRGAAK…VVPAIGAKRF (187 aa). Residues Ser55, Gly236, and Gly238 each contribute to the L-glutamine site. The 193-residue stretch at 188-380 folds into the Glutamine amidotransferase type-1 domain; the sequence is TVAAVDLGIK…FVSLMEGQRA (193 aa). Catalysis depends on Cys264, which acts as the Nucleophile. 5 residues coordinate L-glutamine: Phe265, Gln268, Asn306, Gly308, and Phe309. Active-site residues include His354 and Glu356.

This sequence belongs to the CarA family. As to quaternary structure, composed of two chains; the small (or glutamine) chain promotes the hydrolysis of glutamine to ammonia, which is used by the large (or ammonia) chain to synthesize carbamoyl phosphate. Tetramer of heterodimers (alpha,beta)4.

The catalysed reaction is hydrogencarbonate + L-glutamine + 2 ATP + H2O = carbamoyl phosphate + L-glutamate + 2 ADP + phosphate + 2 H(+). The enzyme catalyses L-glutamine + H2O = L-glutamate + NH4(+). It participates in amino-acid biosynthesis; L-arginine biosynthesis; carbamoyl phosphate from bicarbonate: step 1/1. The protein operates within pyrimidine metabolism; UMP biosynthesis via de novo pathway; (S)-dihydroorotate from bicarbonate: step 1/3. Functionally, small subunit of the glutamine-dependent carbamoyl phosphate synthetase (CPSase). CPSase catalyzes the formation of carbamoyl phosphate from the ammonia moiety of glutamine, carbonate, and phosphate donated by ATP, constituting the first step of 2 biosynthetic pathways, one leading to arginine and/or urea and the other to pyrimidine nucleotides. The small subunit (glutamine amidotransferase) binds and cleaves glutamine to supply the large subunit with the substrate ammonia. The sequence is that of Carbamoyl phosphate synthase small chain from Streptomyces avermitilis (strain ATCC 31267 / DSM 46492 / JCM 5070 / NBRC 14893 / NCIMB 12804 / NRRL 8165 / MA-4680).